The sequence spans 158 residues: Protein-export protein SecB (158 aa).

The protein belongs to the SecB family. Homotetramer, a dimer of dimers. One homotetramer interacts with 1 SecA dimer.

It localises to the cytoplasm. One of the proteins required for the normal export of preproteins out of the cell cytoplasm. It is a molecular chaperone that binds to a subset of precursor proteins, maintaining them in a translocation-competent state. It also specifically binds to its receptor SecA. The polypeptide is Protein-export protein SecB (Yersinia pestis (strain Pestoides F)).